The following is a 317-amino-acid chain: 4-hydroxy-3-methylbut-2-enyl diphosphate reductase (317 aa).

Position 12 (cysteine 12) interacts with [4Fe-4S] cluster. The (2E)-4-hydroxy-3-methylbut-2-enyl diphosphate site is built by histidine 41 and histidine 74. Dimethylallyl diphosphate-binding residues include histidine 41 and histidine 74. Isopentenyl diphosphate is bound by residues histidine 41 and histidine 74. Cysteine 96 serves as a coordination point for [4Fe-4S] cluster. Residue histidine 124 coordinates (2E)-4-hydroxy-3-methylbut-2-enyl diphosphate. Residue histidine 124 coordinates dimethylallyl diphosphate. Residue histidine 124 participates in isopentenyl diphosphate binding. The active-site Proton donor is glutamate 126. Threonine 169 contributes to the (2E)-4-hydroxy-3-methylbut-2-enyl diphosphate binding site. Residue cysteine 199 participates in [4Fe-4S] cluster binding. Residues serine 227, serine 228, asparagine 229, and serine 271 each contribute to the (2E)-4-hydroxy-3-methylbut-2-enyl diphosphate site. Dimethylallyl diphosphate-binding residues include serine 227, serine 228, asparagine 229, and serine 271. Isopentenyl diphosphate contacts are provided by serine 227, serine 228, asparagine 229, and serine 271.

Belongs to the IspH family. The cofactor is [4Fe-4S] cluster.

The catalysed reaction is isopentenyl diphosphate + 2 oxidized [2Fe-2S]-[ferredoxin] + H2O = (2E)-4-hydroxy-3-methylbut-2-enyl diphosphate + 2 reduced [2Fe-2S]-[ferredoxin] + 2 H(+). The enzyme catalyses dimethylallyl diphosphate + 2 oxidized [2Fe-2S]-[ferredoxin] + H2O = (2E)-4-hydroxy-3-methylbut-2-enyl diphosphate + 2 reduced [2Fe-2S]-[ferredoxin] + 2 H(+). It participates in isoprenoid biosynthesis; dimethylallyl diphosphate biosynthesis; dimethylallyl diphosphate from (2E)-4-hydroxy-3-methylbutenyl diphosphate: step 1/1. It functions in the pathway isoprenoid biosynthesis; isopentenyl diphosphate biosynthesis via DXP pathway; isopentenyl diphosphate from 1-deoxy-D-xylulose 5-phosphate: step 6/6. In terms of biological role, catalyzes the conversion of 1-hydroxy-2-methyl-2-(E)-butenyl 4-diphosphate (HMBPP) into a mixture of isopentenyl diphosphate (IPP) and dimethylallyl diphosphate (DMAPP). Acts in the terminal step of the DOXP/MEP pathway for isoprenoid precursor biosynthesis. This Vibrio parahaemolyticus serotype O3:K6 (strain RIMD 2210633) protein is 4-hydroxy-3-methylbut-2-enyl diphosphate reductase.